The chain runs to 121 residues: MNELIKMVGIDYTEQRKKFPDFKAGDTINVHIKISEGKKERIQQFQGVVIQRRNPNTNGETFTVRKISEGIGVERIFPLLSPTIEKIELKQQGLVRRARLFYLQGKQGKAARIKAKITSKA.

This sequence belongs to the bacterial ribosomal protein bL19 family.

In terms of biological role, this protein is located at the 30S-50S ribosomal subunit interface and may play a role in the structure and function of the aminoacyl-tRNA binding site. The polypeptide is Large ribosomal subunit protein bL19 (Amoebophilus asiaticus (strain 5a2)).